The primary structure comprises 504 residues: Catalase (504 aa).

The signal sequence occupies residues 1-21 (MQMSKSFLLITVGLASTSLQA). Residues His72 and Asn145 contribute to the active site. Tyr353 contributes to the heme binding site.

Belongs to the catalase family. Heme is required as a cofactor.

It localises to the periplasm. The enzyme catalyses 2 H2O2 = O2 + 2 H2O. In terms of biological role, decomposes hydrogen peroxide into water and oxygen; serves to protect cells from the toxic effects of hydrogen peroxide. This is Catalase from Vibrio parahaemolyticus serotype O3:K6 (strain RIMD 2210633).